Here is a 336-residue protein sequence, read N- to C-terminus: F420-dependent glucose-6-phosphate dehydrogenase (336 aa).

Position 39 (Asp-39) interacts with coenzyme F420-(gamma-Glu)n. The active-site Proton donor is the His-40. Residues Thr-76 and 107-108 (TG) contribute to the coenzyme F420-(gamma-Glu)n site. Residue Glu-109 is the Proton acceptor of the active site. Residues Asn-112, 177–178 (GG), and 180–181 (EV) contribute to the coenzyme F420-(gamma-Glu)n site. Substrate contacts are provided by Thr-195, Lys-198, Lys-259, and Arg-283.

The protein belongs to the F420-dependent glucose-6-phosphate dehydrogenase family. As to quaternary structure, homodimer.

The enzyme catalyses oxidized coenzyme F420-(gamma-L-Glu)(n) + D-glucose 6-phosphate + H(+) = 6-phospho-D-glucono-1,5-lactone + reduced coenzyme F420-(gamma-L-Glu)(n). In terms of biological role, catalyzes the coenzyme F420-dependent oxidation of glucose 6-phosphate (G6P) to 6-phosphogluconolactone. Appears to have a role in resistance to oxidative stress, via its consumption of G6P that serves as a source of reducing power to combat oxidative stress in mycobacteria. This chain is F420-dependent glucose-6-phosphate dehydrogenase, found in Mycobacterium leprae (strain Br4923).